A 130-amino-acid polypeptide reads, in one-letter code: Small ribosomal subunit protein uS11 (130 aa).

Belongs to the universal ribosomal protein uS11 family. In terms of assembly, part of the 30S ribosomal subunit. Interacts with proteins S7 and S18. Binds to IF-3.

Its function is as follows. Located on the platform of the 30S subunit, it bridges several disparate RNA helices of the 16S rRNA. Forms part of the Shine-Dalgarno cleft in the 70S ribosome. The sequence is that of Small ribosomal subunit protein uS11 from Synechococcus sp. (strain CC9902).